A 420-amino-acid polypeptide reads, in one-letter code: D-tagatose-1,6-bisphosphate aldolase subunit GatZ (420 aa).

The protein belongs to the GatZ/KbaZ family. GatZ subfamily. As to quaternary structure, forms a complex with GatY.

The protein operates within carbohydrate metabolism; D-tagatose 6-phosphate degradation; D-glyceraldehyde 3-phosphate and glycerone phosphate from D-tagatose 6-phosphate: step 2/2. Its function is as follows. Component of the tagatose-1,6-bisphosphate aldolase GatYZ that is required for full activity and stability of the Y subunit. Could have a chaperone-like function for the proper and stable folding of GatY. When expressed alone, GatZ does not show any aldolase activity. Is involved in the catabolism of galactitol. The sequence is that of D-tagatose-1,6-bisphosphate aldolase subunit GatZ from Escherichia coli (strain SE11).